We begin with the raw amino-acid sequence, 500 residues long: Zinc finger and BTB domain-containing protein 34 (500 aa).

A BTB domain is found at 32 to 96 (CDIIVHIQGQ…CYTGRMSLQL (65 aa)). Ser164 is modified (phosphoserine). Residues 164–209 (SPPYCSQGRQPTASSDLRMETTPSKALRSRLQEEGHSDRGSSGSVS) are disordered. Over residues 193-202 (RLQEEGHSDR) the composition is skewed to basic and acidic residues. Glycyl lysine isopeptide (Lys-Gly) (interchain with G-Cter in SUMO2) cross-links involve residues Lys235 and Lys237. A compositionally biased stretch (basic and acidic residues) spans 236 to 245 (VKMEKSDRPS). Disordered regions lie at residues 236-256 (VKME…GDDG) and 341-360 (SDSE…RERS). C2H2-type zinc fingers lie at residues 372 to 394 (LICI…MRLH) and 400 to 422 (FVCK…IRGH). Lys426 is covalently cross-linked (Glycyl lysine isopeptide (Lys-Gly) (interchain with G-Cter in SUMO2)). A C2H2-type 3 zinc finger spans residues 428 to 451 (FRCEICGKCFPFQGTLNQHLRKNH). Position 463 is a phosphoserine (Ser463). Lys474 participates in a covalent cross-link: Glycyl lysine isopeptide (Lys-Gly) (interchain with G-Cter in SUMO2). The interval 478–500 (DASASEMGLDSRMEIHTVSDAPD) is disordered.

In terms of tissue distribution, expressed in several tissues, including heart, brain, thymus, skeletal muscle, small intestine, testis, kidney, placenta, peripheral blood cells and adult and fetal liver.

The protein resides in the nucleus. May be a transcriptional repressor. The chain is Zinc finger and BTB domain-containing protein 34 (ZBTB34) from Homo sapiens (Human).